We begin with the raw amino-acid sequence, 146 residues long: Holo-[acyl-carrier-protein] synthase (146 aa).

The Mg(2+) site is built by aspartate 9 and glutamate 58.

The protein belongs to the P-Pant transferase superfamily. AcpS family. The cofactor is Mg(2+).

Its subcellular location is the cytoplasm. The catalysed reaction is apo-[ACP] + CoA = holo-[ACP] + adenosine 3',5'-bisphosphate + H(+). Transfers the 4'-phosphopantetheine moiety from coenzyme A to a Ser of acyl-carrier-protein. This is Holo-[acyl-carrier-protein] synthase from Baumannia cicadellinicola subsp. Homalodisca coagulata.